The chain runs to 159 residues: MSRQTPARKRRKKYSEKSDAIYHNRLVNMLVNRILKNGKKALAYKIFYRSMKTIYENTNINPLLIIRQAIQTLTPKVMVKARRVTGTTHQIPIDVKPKQGTILAIRWLLESSRKRSGQTMHDKLSHEIMDAARNKGHAIRKKEETHKMAESNRAXAHYR.

The disordered stretch occupies residues 137–159 (HAIRKKEETHKMAESNRAXAHYR). Basic and acidic residues predominate over residues 141–150 (KKEETHKMAE).

Belongs to the universal ribosomal protein uS7 family. Part of the 30S ribosomal subunit.

The protein resides in the plastid. It localises to the chloroplast. One of the primary rRNA binding proteins, it binds directly to 16S rRNA where it nucleates assembly of the head domain of the 30S subunit. The protein is Small ribosomal subunit protein uS7c (rps7) of Sciadopitys verticillata (Japanese umbrella-pine).